The primary structure comprises 302 residues: GTP cyclohydrolase FolE2 (302 aa).

The tract at residues 1–27 (MPKKQLPPKEERHKLFGSVPPKERTKP) is disordered.

It belongs to the GTP cyclohydrolase IV family.

The catalysed reaction is GTP + H2O = 7,8-dihydroneopterin 3'-triphosphate + formate + H(+). The protein operates within cofactor biosynthesis; 7,8-dihydroneopterin triphosphate biosynthesis; 7,8-dihydroneopterin triphosphate from GTP: step 1/1. Its function is as follows. Converts GTP to 7,8-dihydroneopterin triphosphate. This is GTP cyclohydrolase FolE2 from Oceanobacillus iheyensis (strain DSM 14371 / CIP 107618 / JCM 11309 / KCTC 3954 / HTE831).